The sequence spans 327 residues: Elongation factor P--(R)-beta-lysine ligase (327 aa).

80–82 (SPE) is a substrate binding site. ATP is bound by residues 104-106 (RNE) and Asn113. Tyr122 is a binding site for substrate. ATP is bound at residue 246–247 (EL). Residue Glu253 participates in substrate binding. Gly302 provides a ligand contact to ATP.

It belongs to the class-II aminoacyl-tRNA synthetase family. EpmA subfamily. As to quaternary structure, homodimer.

The catalysed reaction is D-beta-lysine + L-lysyl-[protein] + ATP = N(6)-((3R)-3,6-diaminohexanoyl)-L-lysyl-[protein] + AMP + diphosphate + H(+). In terms of biological role, with EpmB is involved in the beta-lysylation step of the post-translational modification of translation elongation factor P (EF-P). Catalyzes the ATP-dependent activation of (R)-beta-lysine produced by EpmB, forming a lysyl-adenylate, from which the beta-lysyl moiety is then transferred to the epsilon-amino group of a conserved specific lysine residue in EF-P. The protein is Elongation factor P--(R)-beta-lysine ligase of Haemophilus ducreyi (strain 35000HP / ATCC 700724).